A 368-amino-acid chain; its full sequence is Glutamate 5-kinase (368 aa).

Position 9 (Lys-9) interacts with ATP. 3 residues coordinate substrate: Ser-49, Asp-136, and Asn-148. Residues 168–169 and 210–216 contribute to the ATP site; these read TD and TGGMMTK. The PUA domain occupies 275–353; sequence AGIITIDDGA…ADIENVLGYE (79 aa).

The protein belongs to the glutamate 5-kinase family.

The protein localises to the cytoplasm. It catalyses the reaction L-glutamate + ATP = L-glutamyl 5-phosphate + ADP. It participates in amino-acid biosynthesis; L-proline biosynthesis; L-glutamate 5-semialdehyde from L-glutamate: step 1/2. Functionally, catalyzes the transfer of a phosphate group to glutamate to form L-glutamate 5-phosphate. The polypeptide is Glutamate 5-kinase (Haemophilus influenzae (strain 86-028NP)).